Consider the following 355-residue polypeptide: MTALKNDRFLRALLKQPVDVTPVWMMRQAGRYLPEYRATRAKAGDFMSLCMNPELACEVTLQPLDRYPQLDAAILFSDILTIPDAMGQGLYFETGEGPRFRKVVSSLADIEALPVPDPEQDLGYVMDAVRTIRRELNGRVPLIGFSGSPWTLATYMVEGGSSKDFRKSKAMLYDNPKAMHALLDKLAQSVTSYLNGQIHAGAQAVQIFDSWGGSLSAAAYQEFSLAYMRKIVDGLIREHDGRRVPVILFTKGGGLWLESMAEVGAEALGLDWTCDIGSARARVGERVALQGNMDPSVLYANPAAIRAEVARILAAYGKGTGHVFNLGHGITPEVDPAHAGAFFEAVHELSAQYHG.

Residues 27-31 (RQAGR), F46, D78, Y155, S210, and H328 contribute to the substrate site.

This sequence belongs to the uroporphyrinogen decarboxylase family. Homodimer.

It localises to the cytoplasm. It carries out the reaction uroporphyrinogen III + 4 H(+) = coproporphyrinogen III + 4 CO2. Its pathway is porphyrin-containing compound metabolism; protoporphyrin-IX biosynthesis; coproporphyrinogen-III from 5-aminolevulinate: step 4/4. Catalyzes the decarboxylation of four acetate groups of uroporphyrinogen-III to yield coproporphyrinogen-III. The protein is Uroporphyrinogen decarboxylase of Pseudomonas aeruginosa (strain ATCC 15692 / DSM 22644 / CIP 104116 / JCM 14847 / LMG 12228 / 1C / PRS 101 / PAO1).